The sequence spans 95 residues: uncharacterized protein (95 aa).

Residues 27–47 (SFGLAIIGILLIACEIILFLT) form a helical membrane-spanning segment.

It is found in the membrane. This is an uncharacterized protein from Homo sapiens (Human).